A 368-amino-acid polypeptide reads, in one-letter code: Galactoside 2-alpha-L-fucosyltransferase SEC1 (368 aa).

The tract at residues 1–20 (MWDMRAVAPQRPAAGHPRAG) is disordered. Residues 1–31 (MWDMRAVAPQRPAAGHPRAGWPRKLKTAATR) lie on the Cytoplasmic side of the membrane. A helical transmembrane segment spans residues 32–52 (FWATCPSSSTVCFLFVIFAVS). The Lumenal segment spans residues 53 to 368 (TVFHCHRRLA…NLGQARESHP (316 aa)).

The protein belongs to the glycosyltransferase 11 family. In terms of tissue distribution, kidney.

Its subcellular location is the golgi apparatus. The protein localises to the golgi stack membrane. The catalysed reaction is a ganglioside GM1 + GDP-beta-L-fucose = a ganglioside Fuc-GM1 + GDP + H(+). It participates in protein modification; protein glycosylation. In terms of biological role, catalyzes the transfer of alpha 1,2-linked fucose to ganglioside GM1 and galacto-N-biose. This is Galactoside 2-alpha-L-fucosyltransferase SEC1 from Bos taurus (Bovine).